The following is a 273-amino-acid chain: 4-hydroxy-tetrahydrodipicolinate reductase (273 aa).

NAD(+) contacts are provided by residues 12–17 (GAGGRM) and glutamate 38. NADP(+) is bound at residue arginine 39. NAD(+) contacts are provided by residues 102–104 (GTT) and 126–129 (AANF). The Proton donor/acceptor role is filled by histidine 159. (S)-2,3,4,5-tetrahydrodipicolinate is bound at residue histidine 160. Catalysis depends on lysine 163, which acts as the Proton donor. Position 169–170 (169–170 (GT)) interacts with (S)-2,3,4,5-tetrahydrodipicolinate.

Belongs to the DapB family. As to quaternary structure, homotetramer.

The protein resides in the cytoplasm. It catalyses the reaction (S)-2,3,4,5-tetrahydrodipicolinate + NAD(+) + H2O = (2S,4S)-4-hydroxy-2,3,4,5-tetrahydrodipicolinate + NADH + H(+). It carries out the reaction (S)-2,3,4,5-tetrahydrodipicolinate + NADP(+) + H2O = (2S,4S)-4-hydroxy-2,3,4,5-tetrahydrodipicolinate + NADPH + H(+). It participates in amino-acid biosynthesis; L-lysine biosynthesis via DAP pathway; (S)-tetrahydrodipicolinate from L-aspartate: step 4/4. Catalyzes the conversion of 4-hydroxy-tetrahydrodipicolinate (HTPA) to tetrahydrodipicolinate. This Escherichia coli O127:H6 (strain E2348/69 / EPEC) protein is 4-hydroxy-tetrahydrodipicolinate reductase.